A 254-amino-acid chain; its full sequence is Probable pectate lyase E (254 aa).

A signal peptide spans 1–17; the sequence is MYQPLLLLPLLLTSAFA. A glycan (N-linked (GlcNAc...) asparagine) is linked at Asn-175. Positions 227–254 are disordered; the sequence is TDNNDKEPKKKGSGPSNACKYKEPLSKC.

It belongs to the polysaccharide lyase 3 family. The cofactor is Ca(2+).

The protein localises to the secreted. It carries out the reaction Eliminative cleavage of (1-&gt;4)-alpha-D-galacturonan to give oligosaccharides with 4-deoxy-alpha-D-galact-4-enuronosyl groups at their non-reducing ends.. Pectinolytic enzyme consist of four classes of enzymes: pectin lyase, polygalacturonase, pectin methylesterase and rhamnogalacturonase. Among pectinolytic enzymes, pectin lyase is the most important in depolymerization of pectin, since it cleaves internal glycosidic bonds of highly methylated pectins. Favors pectate, the anion, over pectin, the methyl ester. In Neosartorya fischeri (strain ATCC 1020 / DSM 3700 / CBS 544.65 / FGSC A1164 / JCM 1740 / NRRL 181 / WB 181) (Aspergillus fischerianus), this protein is Probable pectate lyase E (plyE).